The primary structure comprises 1270 residues: Glycine betaine reductase ATRR (1270 aa).

The adenylation (A) domain stretch occupies residues 14 to 418; the sequence is FTQQVRASPN…MIKLRGYSVV (405 aa). Residues 528–605 form the Carrier domain; that stretch reads KEDPIGIEDI…GHLDTVRAIR (78 aa). Position 565 is an O-(pantetheine 4'-phosphoryl)serine (serine 565). Positions 643-937 are carboxylic acid reductase domain R1; it reads KTVLLTGVTG…EPLSWDDWVA (295 aa). The aldehyde reductase domain R2 stretch occupies residues 1026 to 1256; the sequence is PLSGKVAVVT…IYALRQPEHV (231 aa).

This sequence belongs to the NRP synthetase family.

The tetramethylammonium ion, which mimics the head group of glycine betaine, acts as a competitive inhibitor of ATRR A domain, whereas the potency decreased by three orders of magnitude with dimethylammonium. Choline is a mixed inhibitor for both glycine betaine reductase and aldehyde reductase activity but more potent in competition against glycine betaine in the first reduction step. Therefore, choline could act as a feedback inhibitor to regulate ATRR enzymatic activity. The lowered binding affinity of choline to R2 favors the release of choline after glycine betaine aldehyde reduction to avoid direct product inhibition. In terms of biological role, NRPS-like enzyme with an unusual domain architecture that converts back glycine betaine to choline via a 2-step reduction mechanism, and thereby can be an alternative source of choline. Permits direct reutilization of endogenously stored glycine betaine for on-demand biosynthesis of choline and choline derivatives, including phospholipid phosphatidylcholine (PC) which has an essential role in maintaining membrane integrity and functionality, or choline-O-sulfate, a mean for intracellular sulfate storage. Glycine betaine is activated by the adenylation (A) domain, and transferred to the thiolation (T) domain. Movement of the phosphopantetheine arm to the thioester reductase domain R1 then allows thioester reduction by NADPH of glycine betainoyl thioester to glycine betaine aldehyde, which is in turn reduced to choline by the aldehyde reductase domain R2. This is Glycine betaine reductase ATRR from Emericella nidulans (strain FGSC A4 / ATCC 38163 / CBS 112.46 / NRRL 194 / M139) (Aspergillus nidulans).